A 221-amino-acid chain; its full sequence is Deoxyribose-phosphate aldolase (221 aa).

Aspartate 96 functions as the Proton donor/acceptor in the catalytic mechanism. Lysine 157 serves as the catalytic Schiff-base intermediate with acetaldehyde. Lysine 185 acts as the Proton donor/acceptor in catalysis.

This sequence belongs to the DeoC/FbaB aldolase family. DeoC type 1 subfamily.

The protein localises to the cytoplasm. The catalysed reaction is 2-deoxy-D-ribose 5-phosphate = D-glyceraldehyde 3-phosphate + acetaldehyde. It participates in carbohydrate degradation; 2-deoxy-D-ribose 1-phosphate degradation; D-glyceraldehyde 3-phosphate and acetaldehyde from 2-deoxy-alpha-D-ribose 1-phosphate: step 2/2. Functionally, catalyzes a reversible aldol reaction between acetaldehyde and D-glyceraldehyde 3-phosphate to generate 2-deoxy-D-ribose 5-phosphate. The protein is Deoxyribose-phosphate aldolase of Crocosphaera subtropica (strain ATCC 51142 / BH68) (Cyanothece sp. (strain ATCC 51142)).